Consider the following 256-residue polypeptide: Large ribosomal subunit protein uL2 (256 aa).

The segment at E208 to S230 is disordered.

Belongs to the universal ribosomal protein uL2 family. In larvae tissues examined: gut, brain imaginal disk, salivary glands, fat body, muscles, epidermis and trachaea.

It is found in the cytoplasm. The chain is Large ribosomal subunit protein uL2 (RpL8) from Drosophila melanogaster (Fruit fly).